Here is a 500-residue protein sequence, read N- to C-terminus: L-arabinose isomerase (500 aa).

Mn(2+) is bound by residues Glu306, Glu333, His350, and His450.

Belongs to the arabinose isomerase family. Homohexamer. It depends on Mn(2+) as a cofactor.

It catalyses the reaction beta-L-arabinopyranose = L-ribulose. The protein operates within carbohydrate degradation; L-arabinose degradation via L-ribulose; D-xylulose 5-phosphate from L-arabinose (bacterial route): step 1/3. Its function is as follows. Catalyzes the conversion of L-arabinose to L-ribulose. This Yersinia pestis (strain Pestoides F) protein is L-arabinose isomerase.